The sequence spans 342 residues: Adenylate isopentenyltransferase 6, chloroplastic (342 aa).

The N-terminal 33 residues, 1–33, are a transit peptide targeting the chloroplast; sequence MQQLMTLLSPPLSHSSLLPTVTTKFGSPRLVTT. 52–59 lines the ATP pocket; that stretch reads GTTGTGKS.

This sequence belongs to the IPP transferase family. Expressed in siliques, at the mRNA level.

The protein localises to the plastid. It localises to the chloroplast. It catalyses the reaction dimethylallyl diphosphate + ADP = N(6)-(dimethylallyl)adenosine 5'-diphosphate + diphosphate. It carries out the reaction dimethylallyl diphosphate + ATP = N(6)-(dimethylallyl)adenosine 5'-triphosphate + diphosphate. Its function is as follows. Involved in cytokinin biosynthesis. Catalyzes the transfer of an isopentenyl group from dimethylallyl diphosphate (DMAPP) to ATP and ADP. This Arabidopsis thaliana (Mouse-ear cress) protein is Adenylate isopentenyltransferase 6, chloroplastic (IPT6).